A 208-amino-acid polypeptide reads, in one-letter code: Peptide deformylase 3 (208 aa).

Fe cation is bound by residues cysteine 120 and histidine 162. Residue glutamate 163 is part of the active site. A Fe cation-binding site is contributed by histidine 166.

Belongs to the polypeptide deformylase family. Fe(2+) is required as a cofactor.

The enzyme catalyses N-terminal N-formyl-L-methionyl-[peptide] + H2O = N-terminal L-methionyl-[peptide] + formate. Removes the formyl group from the N-terminal Met of newly synthesized proteins. Requires at least a dipeptide for an efficient rate of reaction. N-terminal L-methionine is a prerequisite for activity but the enzyme has broad specificity at other positions. This is Peptide deformylase 3 from Streptomyces coelicolor (strain ATCC BAA-471 / A3(2) / M145).